The sequence spans 106 residues: Transcriptional and immune response regulator (106 aa).

As to quaternary structure, monomer. Interacts with NOTCH2 (via ANK repeats), the interaction inhibits the nuclear translocation of NOTCH2 N2ICD. Interacts (C-terminus) with CBY1 (C-terminus), TCIM competes with CTNNB1 for the interaction with CBY1. Ubiquitous. Expressed in thyroid papillary carcinoma. Expressed in liver, expression levels decrease in hepatocellular carcinoma. Slightly detected in normal lung, its expression is highly induced in lung cancer cells (at protein level).

Its subcellular location is the cytoplasm. It is found in the nucleus. The protein localises to the nucleolus. It localises to the nucleus speckle. In terms of biological role, seems to be involved in the regulation of cell growth an differentiation, may play different and opposite roles depending on the tissue or cell type. May enhance the WNT-CTNNB1 pathway by relieving antagonistic activity of CBY1. Enhances the proliferation of follicular dendritic cells. Plays a role in the mitogen-activated MAPK2/3 signaling pathway, positively regulates G1-to-S-phase transition of the cell cycle. In endothelial cells, enhances key inflammatory mediators and inflammatory response through the modulation of NF-kappaB transcriptional regulatory activity. Involved in the regulation of heat shock response, seems to play a positive feedback with HSF1 to modulate heat-shock downstream gene expression. Plays a role in the regulation of hematopoiesis even if the mechanisms are unknown. In cancers such as thyroid or lung cancer, it has been described as promoter of cell proliferation, G1-to-S-phase transition and inhibitor of apoptosis. However, it negatively regulates self-renewal of liver cancer cells via suppresion of NOTCH2 signaling. The sequence is that of Transcriptional and immune response regulator from Homo sapiens (Human).